We begin with the raw amino-acid sequence, 585 residues long: Potassium-transporting ATPase potassium-binding subunit (585 aa).

The next 12 membrane-spanning stretches (helical) occupy residues G23–F43, F85–F105, F152–F172, I194–I214, V275–F295, V307–V327, A345–A365, N367–L387, G397–G417, L444–V464, L502–A522, and V547–L567.

Belongs to the KdpA family. As to quaternary structure, the system is composed of three essential subunits: KdpA, KdpB and KdpC.

It is found in the cell membrane. Part of the high-affinity ATP-driven potassium transport (or Kdp) system, which catalyzes the hydrolysis of ATP coupled with the electrogenic transport of potassium into the cytoplasm. This subunit binds the extracellular potassium ions and delivers the ions to the membrane domain of KdpB through an intramembrane tunnel. This is Potassium-transporting ATPase potassium-binding subunit from Thermoplasma acidophilum (strain ATCC 25905 / DSM 1728 / JCM 9062 / NBRC 15155 / AMRC-C165).